The sequence spans 249 residues: Ribosomal RNA small subunit methyltransferase G (249 aa).

S-adenosyl-L-methionine is bound by residues Gly88, Phe93, 111–113 (DAT), 139–140 (AE), and Arg158. Cysteines 164 and 249 form a disulfide. Positions 245–246 (RH) are RNA binding.

This sequence belongs to the methyltransferase superfamily. RNA methyltransferase RsmG family.

The protein localises to the cytoplasm. The catalysed reaction is guanosine(527) in 16S rRNA + S-adenosyl-L-methionine = N(7)-methylguanosine(527) in 16S rRNA + S-adenosyl-L-homocysteine. Its function is as follows. Specifically methylates the N7 position of guanine in position 527 of 16S rRNA. Shows a marked preference for deproteinized 16S rRNA as substrate and is completely inactive with native 30S subunits as substrate. The chain is Ribosomal RNA small subunit methyltransferase G from Thermus thermophilus (strain ATCC 27634 / DSM 579 / HB8).